The following is a 930-amino-acid chain: Isoleucine--tRNA ligase (930 aa).

The 'HIGH' region signature appears at 57–67; it reads PYANGNIHVGH. Glutamate 554 contacts L-isoleucyl-5'-AMP. The 'KMSKS' region motif lies at 595 to 599; it reads KMSKS. Lysine 598 is a binding site for ATP. Positions 888, 891, 908, and 911 each coordinate Zn(2+).

The protein belongs to the class-I aminoacyl-tRNA synthetase family. IleS type 1 subfamily. As to quaternary structure, monomer. It depends on Zn(2+) as a cofactor.

It is found in the cytoplasm. The catalysed reaction is tRNA(Ile) + L-isoleucine + ATP = L-isoleucyl-tRNA(Ile) + AMP + diphosphate. Catalyzes the attachment of isoleucine to tRNA(Ile). As IleRS can inadvertently accommodate and process structurally similar amino acids such as valine, to avoid such errors it has two additional distinct tRNA(Ile)-dependent editing activities. One activity is designated as 'pretransfer' editing and involves the hydrolysis of activated Val-AMP. The other activity is designated 'posttransfer' editing and involves deacylation of mischarged Val-tRNA(Ile). In Streptococcus sanguinis (strain SK36), this protein is Isoleucine--tRNA ligase.